A 130-amino-acid chain; its full sequence is MVEVWWSLIGAAVPALIAGQAWRIKKRHGEEERIKSARGREKSSDEIFVCERVCTSKRMLKKVGAFSKDPIPDTCVTVCGVSELDACSDACARTVCVNQHQVANWNDICLRRCQSECLKLSSSSSSSRYS.

Residues 1–18 form the signal peptide; sequence MVEVWWSLIGAAVPALIA.

This is an uncharacterized protein from Arabidopsis thaliana (Mouse-ear cress).